Here is a 529-residue protein sequence, read N- to C-terminus: DEP domain-containing protein 1B (529 aa).

The DEP domain occupies 24–108 (FRAKMPLRKH…DNRHLYRFPP (85 aa)). A Phosphoserine modification is found at Ser160. The Rho-GAP domain occupies 201 to 393 (DSLEEVLDVK…FLMDNYQEIL (193 aa)). Phosphoserine is present on Ser436.

This Homo sapiens (Human) protein is DEP domain-containing protein 1B (DEPDC1B).